A 328-amino-acid polypeptide reads, in one-letter code: 3,4-dihydroxyphenylacetaldehyde synthase 2 (328 aa).

Residue Asn111 is part of the active site. Position 222 is an N6-(pyridoxal phosphate)lysine (Lys222).

It belongs to the group II decarboxylase family. Requires pyridoxal 5'-phosphate as cofactor.

It catalyses the reaction L-dopa + O2 + H2O + H(+) = 3,4-dihydroxyphenylacetaldehyde + H2O2 + NH4(+) + CO2. In terms of biological role, catalyzes the decarboxylation-oxidative deamination of L-3,4-dihydroxyphenylalanine (L-DOPA) to 3,4-dihydroxylphenylacetaldehyde (DHPAA). Involved in cuticle development. Probably responsible for the protein cross-linking during the development of flexible cuticles. This chain is 3,4-dihydroxyphenylacetaldehyde synthase 2 (amd), found in Drosophila simulans (Fruit fly).